The chain runs to 377 residues: Lactosylceramide 1,3-N-acetyl-beta-D-glucosaminyltransferase B (377 aa).

Residues 1–13 (MLISARRLRRCQS) lie on the Cytoplasmic side of the membrane. Residues 14-30 (LQLLASCFVLSLMALLV) traverse the membrane as a helical; Signal-anchor for type II membrane protein segment. At 31-377 (QEDNSLVNHV…DTYPCSAAWS (347 aa)) the chain is on the lumenal side. Asparagine 56, asparagine 167, and asparagine 275 each carry an N-linked (GlcNAc...) asparagine glycan.

Belongs to the glycosyltransferase 31 family.

The protein localises to the golgi apparatus membrane. It carries out the reaction a beta-D-Gal-(1-&gt;4)-beta-D-Glc-(1&lt;-&gt;1)-Cer(d18:1(4E)) + UDP-N-acetyl-alpha-D-glucosamine = a beta-D-GlcNAc-(1-&gt;3)-beta-D-Gal-(1-&gt;4)-beta-D-Glc-(1&lt;-&gt;1)-Cer(d18:1(4E)) + UDP + H(+). The catalysed reaction is a neolactoside nLc4Cer(d18:1(4E)) + UDP-N-acetyl-alpha-D-glucosamine = a neolactoside IV(3)-beta-GlcNAc-nLc4Cer(d18:1(4E)) + UDP + H(+). The protein operates within protein modification; protein glycosylation. In terms of biological role, beta-1,3-N-acetylglucosaminyltransferase that plays a key role in the synthesis of lacto- or neolacto-series carbohydrate chains on glycolipids. The chain is Lactosylceramide 1,3-N-acetyl-beta-D-glucosaminyltransferase B (b3gnt5-b) from Xenopus laevis (African clawed frog).